We begin with the raw amino-acid sequence, 224 residues long: Orotidine 5'-phosphate decarboxylase (224 aa).

Substrate is bound by residues Asp10, Lys32, 59 to 68, Thr115, Arg175, Gln184, Gly204, and Arg205; that span reads DLKLHDIPNT. Lys61 functions as the Proton donor in the catalytic mechanism.

The protein belongs to the OMP decarboxylase family. Type 1 subfamily. In terms of assembly, homodimer.

It carries out the reaction orotidine 5'-phosphate + H(+) = UMP + CO2. It participates in pyrimidine metabolism; UMP biosynthesis via de novo pathway; UMP from orotate: step 2/2. In terms of biological role, catalyzes the decarboxylation of orotidine 5'-monophosphate (OMP) to uridine 5'-monophosphate (UMP). The chain is Orotidine 5'-phosphate decarboxylase from Erythrobacter litoralis (strain HTCC2594).